Here is a 558-residue protein sequence, read N- to C-terminus: Phosphatidylserine lipase ABHD16A (558 aa).

Transmembrane regions (helical) follow at residues 60–80 and 93–113; these read ILAL…FAFF and VVPF…VACL. Topologically, residues 114–558 are cytoplasmic; it reads RGIGRWTNPQ…AQNFQMPWHL (445 aa). Residues 281–407 enclose the AB hydrolase-1 domain; it reads LVICCEGNAG…LVTRTVRQHL (127 aa). Catalysis depends on charge relay system residues Ser355, Asp430, and His507.

The protein belongs to the AB hydrolase superfamily. ABHD16 family.

The protein localises to the membrane. The catalysed reaction is 1-heptadecanoyl-2-(5Z,8Z,11Z,14Z-eicosatetraenoyl)-sn-glycero-3-phosphoserine + H2O = 1-heptadecanoyl-sn-glycero-3-phosphoserine + (5Z,8Z,11Z,14Z)-eicosatetraenoate + H(+). It carries out the reaction 1-hexadecanoyl-2-(9Z-octadecenoyl)-sn-glycero-3-phospho-L-serine + H2O = 1-hexadecanoyl-sn-glycero-3-phospho-L-serine + (9Z)-octadecenoate + H(+). The enzyme catalyses 1-octadecanoyl-2-(9Z,12Z-octadecadienoyl)-sn-glycero-3-phosphoserine + H2O = 1-octadecanoyl-sn-glycero-3-phosphoserine + (9Z,12Z)-octadecadienoate + H(+). It catalyses the reaction 1-heptadecanoyl-2-(5Z,8Z,11Z,14Z-eicosatetraenoyl)-sn-glycero-3-phosphocholine + H2O = 1-heptadecanoyl-sn-glycero-3-phosphocholine + (5Z,8Z,11Z,14Z)-eicosatetraenoate + H(+). The catalysed reaction is 1-hexadecanoyl-2-(9Z-octadecenoyl)-sn-glycero-3-phosphoglycerol + H2O = 1-hexadecanoyl-sn-glycero-3-phosphoglycerol + (9Z)-octadecenoate + H(+). It carries out the reaction 1-hexadecanoyl-2-(9Z-octadecenoyl)-sn-glycero-3-phospho-(1D-myo-inositol) + H2O = 1-hexadecanoyl-sn-glycero-3-phospho-(1D-myo-inositol) + (9Z)-octadecenoate + H(+). The enzyme catalyses 1-heptadecanoyl-2-(5Z,8Z,11Z,14Z-eicosatetraenoyl)-sn-glycero-3-phosphoethanolamine + H2O = 1-heptadecanoyl-sn-glycero-3-phosphoethanolamine + (5Z,8Z,11Z,14Z)-eicosatetraenoate + H(+). It catalyses the reaction 1-hexadecanoyl-2-(9Z-octadecenoyl)-sn-glycero-3-phospho-(1'-sn-glycerol) + H2O = 1-hexadecanoyl-sn-glycero-3-phospho-(1'-sn-glycerol) + (9Z)-octadecenoate + H(+). The catalysed reaction is Hydrolyzes glycerol monoesters of long-chain fatty acids.. It carries out the reaction 1-tetradecanoylglycerol + H2O = tetradecanoate + glycerol + H(+). The enzyme catalyses 2-hexadecanoylglycerol + H2O = glycerol + hexadecanoate + H(+). It catalyses the reaction 1-(9Z-octadecenoyl)-glycerol + H2O = glycerol + (9Z)-octadecenoate + H(+). The catalysed reaction is 2-(9Z-octadecenoyl)-glycerol + H2O = glycerol + (9Z)-octadecenoate + H(+). It carries out the reaction 2-(9Z,12Z-octadecadienoyl)-glycerol + H2O = (9Z,12Z)-octadecadienoate + glycerol + H(+). The enzyme catalyses 1-(5Z,8Z,11Z,14Z-eicosatetraenoyl)-glycerol + H2O = glycerol + (5Z,8Z,11Z,14Z)-eicosatetraenoate + H(+). It catalyses the reaction 2-(5Z,8Z,11Z,14Z-eicosatetraenoyl)-glycerol + H2O = glycerol + (5Z,8Z,11Z,14Z)-eicosatetraenoate + H(+). The catalysed reaction is prostaglandin D2-1-glycerol ester + H2O = prostaglandin D2 + glycerol + H(+). It carries out the reaction 2-glyceryl-15-deoxy-Delta(12,14)-prostaglandin J2 + H2O = 15-deoxy-Delta(12,14)-prostaglandin J2 + glycerol + H(+). The enzyme catalyses 1-(9Z,12Z-octadecadienoyl)-glycerol + H2O = (9Z,12Z)-octadecadienoate + glycerol + H(+). Functionally, phosphatidylserine (PS) lipase that mediates the hydrolysis of phosphatidylserine to generate lysophosphatidylserine (LPS). LPS constitutes a class of signaling lipids that regulates immunological and neurological processes. Has no activity towards diacylglycerol, triacylglycerol or lysophosphatidylserine lipase. Also has monoacylglycerol lipase activity, with preference for 1-(9Z,12Z-octadecadienoyl)-glycerol (1-LG) and 2-glyceryl-15-deoxy-Delta(12,14)-prostaglandin J2 (15d-PGJ(2)-G). The polypeptide is Phosphatidylserine lipase ABHD16A (Bos taurus (Bovine)).